Consider the following 193-residue polypeptide: Ion-translocating oxidoreductase complex subunit B (193 aa).

A hydrophobic region spans residues 1–26 (MSTMLIAVILLTLLALFFGVLLGFAA). In terms of domain architecture, 4Fe-4S spans 32–90 (EGNPIVDELEAILPQTQCGQCGYPGCRPYAEAIANGDKVNKCPPGGTATMEKLANLMGV). Positions 49, 52, 57, 73, 114, 117, 120, 124, 144, 147, 150, and 154 each coordinate [4Fe-4S] cluster. 4Fe-4S ferredoxin-type domains follow at residues 105-134 (KVAYIREDECIGCTKCIQACPVDAIIGAGK) and 136-164 (MHTVLTADCTGCDLCVEPCPVDCIDMIPV).

Belongs to the 4Fe4S bacterial-type ferredoxin family. RnfB subfamily. In terms of assembly, the complex is composed of six subunits: RnfA, RnfB, RnfC, RnfD, RnfE and RnfG. [4Fe-4S] cluster is required as a cofactor.

Its subcellular location is the cell inner membrane. Its function is as follows. Part of a membrane-bound complex that couples electron transfer with translocation of ions across the membrane. The polypeptide is Ion-translocating oxidoreductase complex subunit B (Shewanella sp. (strain ANA-3)).